The chain runs to 165 residues: PTS system glucose-specific EIIA component (165 aa).

A PTS EIIA type-1 domain is found at 33–137 (DPVFAGRMMG…STITPIVITN (105 aa)). The Zn(2+) site is built by His70 and His85. The active-site Tele-phosphohistidine intermediate; for EIIA activity is the His85. His85 carries the post-translational modification Phosphohistidine; by HPr.

In terms of assembly, heterodimer with glycerol kinase (glpk). Zn(2+) is required as a cofactor.

Its subcellular location is the cytoplasm. In terms of biological role, the phosphoenolpyruvate-dependent sugar phosphotransferase system (sugar PTS), a major carbohydrate active transport system, catalyzes the phosphorylation of incoming sugar substrates concomitantly with their translocation across the cell membrane. The enzyme II complex composed of PtsG and Crr is involved in glucose transport. The chain is PTS system glucose-specific EIIA component (crr) from Bacillus anthracis.